The primary structure comprises 651 residues: Acetyl-coenzyme A synthetase (651 aa).

CoA is bound by residues 193–196 (RAGR), T313, and N337. Residues 389-391 (GEP), 413-418 (DTWWQT), D502, and R517 each bind ATP. Residue S525 participates in CoA binding. ATP is bound at residue R528. Residues V539, H541, and V544 each contribute to the Mg(2+) site. R586 lines the CoA pocket. N6-acetyllysine is present on K611.

Belongs to the ATP-dependent AMP-binding enzyme family. Mg(2+) is required as a cofactor. Acetylated. Deacetylation by the SIR2-homolog deacetylase activates the enzyme.

It catalyses the reaction acetate + ATP + CoA = acetyl-CoA + AMP + diphosphate. Functionally, catalyzes the conversion of acetate into acetyl-CoA (AcCoA), an essential intermediate at the junction of anabolic and catabolic pathways. AcsA undergoes a two-step reaction. In the first half reaction, AcsA combines acetate with ATP to form acetyl-adenylate (AcAMP) intermediate. In the second half reaction, it can then transfer the acetyl group from AcAMP to the sulfhydryl group of CoA, forming the product AcCoA. This is Acetyl-coenzyme A synthetase from Shewanella denitrificans (strain OS217 / ATCC BAA-1090 / DSM 15013).